The chain runs to 1177 residues: uncharacterized protein (1177 aa).

The N-terminal stretch at 1–26 (MKKLLKKSKFWWFLLCGLSVSTILVA) is a signal peptide. Residue C27 is the site of N-palmitoyl cysteine attachment. C27 carries S-diacylglycerol cysteine lipidation.

The protein belongs to the MG307/MG309/MG338 family.

The protein resides in the cell membrane. This is an uncharacterized protein from Mycoplasma genitalium (strain ATCC 33530 / DSM 19775 / NCTC 10195 / G37) (Mycoplasmoides genitalium).